The primary structure comprises 590 residues: Aspartate--tRNA(Asp/Asn) ligase (590 aa).

Glu172 contacts L-aspartate. Positions 196 to 199 (QLFK) are aspartate. Arg218 contacts L-aspartate. Residues 218–220 (RDE) and Gln227 each bind ATP. An L-aspartate-binding site is contributed by His449. Glu484 contributes to the ATP binding site. L-aspartate is bound at residue Arg491. 536-539 (GVDR) provides a ligand contact to ATP.

It belongs to the class-II aminoacyl-tRNA synthetase family. Type 1 subfamily. Homodimer.

It is found in the cytoplasm. The catalysed reaction is tRNA(Asx) + L-aspartate + ATP = L-aspartyl-tRNA(Asx) + AMP + diphosphate. Its function is as follows. Aspartyl-tRNA synthetase with relaxed tRNA specificity since it is able to aspartylate not only its cognate tRNA(Asp) but also tRNA(Asn). Reaction proceeds in two steps: L-aspartate is first activated by ATP to form Asp-AMP and then transferred to the acceptor end of tRNA(Asp/Asn). In Francisella tularensis subsp. tularensis (strain WY96-3418), this protein is Aspartate--tRNA(Asp/Asn) ligase.